A 341-amino-acid chain; its full sequence is HTH-type transcriptional repressor PurR (341 aa).

One can recognise an HTH lacI-type domain in the interval 2-56 (ATIKDVAKRAGVSTTTVSHVINKTRFVADETKAAVWEAIKELHYSPSAVARSLKV). The H-T-H motif DNA-binding region spans 4–23 (IKDVAKRAGVSTTTVSHVIN). Residues 48-56 (SAVARSLKV) mediate DNA binding. Positions 73, 190, 192, 221, and 275 each coordinate hypoxanthine.

In terms of assembly, homodimer.

It functions in the pathway purine metabolism; purine nucleotide biosynthesis [regulation]. Functionally, is the main repressor of the genes involved in the de novo synthesis of purine nucleotides, regulating purB, purC, purEK, purF, purHD, purL, purMN and guaBA expression. PurR is allosterically activated to bind its cognate DNA by binding the purine corepressors, hypoxanthine or guanine, thereby effecting transcription repression. This chain is HTH-type transcriptional repressor PurR, found in Edwardsiella ictaluri (strain 93-146).